A 254-amino-acid polypeptide reads, in one-letter code: 3-deoxy-manno-octulosonate cytidylyltransferase (254 aa).

It belongs to the KdsB family.

It is found in the cytoplasm. It catalyses the reaction 3-deoxy-alpha-D-manno-oct-2-ulosonate + CTP = CMP-3-deoxy-beta-D-manno-octulosonate + diphosphate. Its pathway is nucleotide-sugar biosynthesis; CMP-3-deoxy-D-manno-octulosonate biosynthesis; CMP-3-deoxy-D-manno-octulosonate from 3-deoxy-D-manno-octulosonate and CTP: step 1/1. It functions in the pathway bacterial outer membrane biogenesis; lipopolysaccharide biosynthesis. Functionally, activates KDO (a required 8-carbon sugar) for incorporation into bacterial lipopolysaccharide in Gram-negative bacteria. This chain is 3-deoxy-manno-octulosonate cytidylyltransferase, found in Pseudomonas putida (strain W619).